The sequence spans 122 residues: Neuropeptide B (122 aa).

The first 24 residues, 1 to 24 (MAGPAMLVAAALALCLLLASPGLA), serve as a signal peptide directing secretion. At W25 the chain carries 6'-bromotryptophan. A propeptide spanning residues 56 to 122 (SEPRGGTRSL…LSLSASDCRK (67 aa)) is cleaved from the precursor.

Belongs to the neuropeptide B/W family.

Its subcellular location is the secreted. Its function is as follows. May be involved in the regulation of feeding, neuroendocrine system, memory, learning and in the afferent pain pathway. The sequence is that of Neuropeptide B (NPB) from Bos taurus (Bovine).